The chain runs to 646 residues: Phosphomethylpyrimidine synthase (646 aa).

Substrate is bound by residues Asn235, Met264, Tyr293, His329, 349–351, 390–393, and Glu429; these read SRG and DGLR. Residue His433 participates in Zn(2+) binding. A substrate-binding site is contributed by Tyr456. Residue His497 coordinates Zn(2+). Residues Cys577, Cys580, and Cys585 each coordinate [4Fe-4S] cluster.

The protein belongs to the ThiC family. Homodimer. The cofactor is [4Fe-4S] cluster.

The enzyme catalyses 5-amino-1-(5-phospho-beta-D-ribosyl)imidazole + S-adenosyl-L-methionine = 4-amino-2-methyl-5-(phosphooxymethyl)pyrimidine + CO + 5'-deoxyadenosine + formate + L-methionine + 3 H(+). It participates in cofactor biosynthesis; thiamine diphosphate biosynthesis. Its function is as follows. Catalyzes the synthesis of the hydroxymethylpyrimidine phosphate (HMP-P) moiety of thiamine from aminoimidazole ribotide (AIR) in a radical S-adenosyl-L-methionine (SAM)-dependent reaction. The chain is Phosphomethylpyrimidine synthase from Vibrio campbellii (strain ATCC BAA-1116).